We begin with the raw amino-acid sequence, 374 residues long: Serpin B8 (374 aa).

The protein belongs to the serpin family. Ov-serpin subfamily.

It localises to the cytoplasm. In terms of biological role, has an important role in epithelial desmosome-mediated cell-cell adhesion. This Bos taurus (Bovine) protein is Serpin B8 (SERPINB8).